We begin with the raw amino-acid sequence, 682 residues long: Potassium-transporting ATPase ATP-binding subunit (682 aa).

Helical transmembrane passes span Pro34 to Ala54, Ala62 to Ala82, Ile219 to Leu239, and Val254 to Ile274. Asp307 (4-aspartylphosphate intermediate) is an active-site residue. ATP is bound by residues Asp344, Glu348, Phe377–Ser384, and Lys395. Residues Asp518 and Asp522 each contribute to the Mg(2+) site. The next 3 membrane-spanning stretches (helical) occupy residues Phe588–Met608, Ala616–Leu636, and Ile656–Leu676.

Belongs to the cation transport ATPase (P-type) (TC 3.A.3) family. Type IA subfamily. In terms of assembly, the system is composed of three essential subunits: KdpA, KdpB and KdpC.

It is found in the cell inner membrane. It carries out the reaction K(+)(out) + ATP + H2O = K(+)(in) + ADP + phosphate + H(+). Part of the high-affinity ATP-driven potassium transport (or Kdp) system, which catalyzes the hydrolysis of ATP coupled with the electrogenic transport of potassium into the cytoplasm. This subunit is responsible for energy coupling to the transport system and for the release of the potassium ions to the cytoplasm. This is Potassium-transporting ATPase ATP-binding subunit from Escherichia fergusonii (strain ATCC 35469 / DSM 13698 / CCUG 18766 / IAM 14443 / JCM 21226 / LMG 7866 / NBRC 102419 / NCTC 12128 / CDC 0568-73).